The chain runs to 365 residues: tRNA-specific 2-thiouridylase MnmA (365 aa).

Residues A14 to S21 and L40 contribute to the ATP site. The active-site Nucleophile is the C108. A disulfide bond links C108 and C204. Position 132 (G132) interacts with ATP. Residues K154–Q156 are interaction with tRNA. The Cysteine persulfide intermediate role is filled by C204.

The protein belongs to the MnmA/TRMU family.

It is found in the cytoplasm. The enzyme catalyses S-sulfanyl-L-cysteinyl-[protein] + uridine(34) in tRNA + AH2 + ATP = 2-thiouridine(34) in tRNA + L-cysteinyl-[protein] + A + AMP + diphosphate + H(+). In terms of biological role, catalyzes the 2-thiolation of uridine at the wobble position (U34) of tRNA, leading to the formation of s(2)U34. The polypeptide is tRNA-specific 2-thiouridylase MnmA (Rickettsia massiliae (strain Mtu5)).